We begin with the raw amino-acid sequence, 760 residues long: Xaa-Pro dipeptidyl-peptidase (760 aa).

Active-site charge relay system residues include Ser349, Asp469, and His499.

This sequence belongs to the peptidase S15 family. As to quaternary structure, homodimer.

It localises to the cytoplasm. The enzyme catalyses Hydrolyzes Xaa-Pro-|- bonds to release unblocked, N-terminal dipeptides from substrates including Ala-Pro-|-p-nitroanilide and (sequentially) Tyr-Pro-|-Phe-Pro-|-Gly-Pro-|-Ile.. Functionally, removes N-terminal dipeptides sequentially from polypeptides having unsubstituted N-termini provided that the penultimate residue is proline. In Streptococcus pyogenes serotype M12 (strain MGAS9429), this protein is Xaa-Pro dipeptidyl-peptidase.